A 362-amino-acid chain; its full sequence is Chorismate synthase (362 aa).

Arg46 contacts NADP(+). Residues 121–123 (RAS), 237–238 (NA), Gly277, 292–296 (KPTPS), and Arg318 each bind FMN.

The protein belongs to the chorismate synthase family. As to quaternary structure, homotetramer. FMNH2 is required as a cofactor.

It carries out the reaction 5-O-(1-carboxyvinyl)-3-phosphoshikimate = chorismate + phosphate. Its pathway is metabolic intermediate biosynthesis; chorismate biosynthesis; chorismate from D-erythrose 4-phosphate and phosphoenolpyruvate: step 7/7. Functionally, catalyzes the anti-1,4-elimination of the C-3 phosphate and the C-6 proR hydrogen from 5-enolpyruvylshikimate-3-phosphate (EPSP) to yield chorismate, which is the branch point compound that serves as the starting substrate for the three terminal pathways of aromatic amino acid biosynthesis. This reaction introduces a second double bond into the aromatic ring system. The sequence is that of Chorismate synthase from Campylobacter lari (strain RM2100 / D67 / ATCC BAA-1060).